Reading from the N-terminus, the 4004-residue chain is Hybrid PKS-NRPS synthetase mpsA (4004 aa).

Residues 5 to 438 (NEPIAVIGSA…GANAHAILES (434 aa)) form the Ketosynthase family 3 (KS3) domain. Residues cysteine 178, histidine 317, and histidine 358 each act as for beta-ketoacyl synthase activity in the active site. The 324-residue stretch at 544-867 (VFTGQGAQWP…RGGDDVNAFS (324 aa)) folds into the Malonyl-CoA:ACP transacylase (MAT) domain. The N-terminal hotdog fold stretch occupies residues 933-1066 (HPILGVKSIE…GTISITLGIP (134 aa)). The dehydratase (DH) domain stretch occupies residues 933 to 1233 (HPILGVKSIE…SMVPFSNATA (301 aa)). The PKS/mFAS DH domain maps to 933-1234 (HPILGVKSIE…MVPFSNATAE (302 aa)). Catalysis depends on histidine 966, which acts as the Proton acceptor; for dehydratase activity. A C-terminal hotdog fold region spans residues 1081-1234 (MVDVEVDRFY…MVPFSNATAE (154 aa)). Aspartate 1141 serves as the catalytic Proton donor; for dehydratase activity. The segment at 1289 to 1575 (EEEEQTLIHY…DTYAPNFDSL (287 aa)) is methyltransferase (MT) domain. The 171-residue stretch at 2102 to 2272 (TYFMVGLSGE…RRGLAASILG (171 aa)) folds into the Ketoreductase (KR) domain. One can recognise a Carrier 1 domain in the interval 2384–2462 (EVVEIMQAGF…DLLNDALDRL (79 aa)). An O-(pantetheine 4'-phosphoryl)serine modification is found at serine 2422. A disordered region spans residues 2471–2540 (GADPSSVSRP…ERRAAELARK (70 aa)). The span at 2488–2500 (PSVSRPASNAPPV) shows a compositional bias: low complexity. Over residues 2514–2540 (LKAEREREAEAKRKREEERRAAELARK) the composition is skewed to basic and acidic residues. The segment at 2584–3019 (PMSFGQSRFW…RQCAERPGRE (436 aa)) is condensation (C) domain. The adenylation (A) (KR) domain stretch occupies residues 3060 to 3459 (KRHTASLAIK…GRIEGDTQIK (400 aa)). Positions 3570–3647 (ANLTPTESRL…GMARAIDDAT (78 aa)) constitute a Carrier 2 domain. O-(pantetheine 4'-phosphoryl)serine is present on serine 3607. Residues 3694 to 3924 (LTIVLTGATG…VVEGVAQALF (231 aa)) are reductase (RED) domain.

This sequence in the C-terminal section; belongs to the NRP synthetase family. Pantetheine 4'-phosphate serves as cofactor.

It participates in secondary metabolite biosynthesis. Its function is as follows. Hybrid PKS-NRPS synthetase; part of the gene cluster that mediates the biosynthesis of macrophasetins, 3-decalinoyltetramic acids (DTAs) which feature a tetramate (pyrrolidine-2,4-dione) unit connected to a decalin fragment and that have potent bioactivities. The PKS-NRPS mpsA together with its associated enoylreductase partner mpsG incorporate one unit of acetyl-CoA, seven units of malonyl-CoA, and one unit of L-alanine to assemble the linear tetramic acid intermediate corresponding to the backbone of macrophasetins. Without the Diels-Alderase mpsD, the mpsA/G product can undergo the non-enzymatic intramolecular Diels-Alder (IMDA) reaction to generate both macrophasetin A and macrophasetin B. Catalyzed by mpsD, the linear tetramic acid intermediate is thoroughly converted to macrophasetin A via the endo-IMDA reaction in a regioselective and stereoselective manner. Finally, the cytochrome P450 monooxygenase mpsF catalyzes the hydroxylation at C20 to yield the end product macrophasetin C. The chain is Hybrid PKS-NRPS synthetase mpsA from Macrophomina phaseolina (strain MS6) (Charcoal rot fungus).